A 128-amino-acid chain; its full sequence is MTAEISAQYWAFAIFIISAIILCVLILTLSFLLGERKHIKVYSRDLPFESGINPVGNPKLHLSAKFYLIAIFFVLFDIEAFYLYAWSSVIREAGWLGFYEAIIFVSVLLSGLVYLVRIGALKWTPNHS.

The next 3 helical transmembrane spans lie at 12 to 32, 66 to 86, and 96 to 116; these read FAIF…LSFL, FYLI…LYAW, and LGFY…VYLV.

This sequence belongs to the complex I subunit 3 family. NDH-1 is composed of 14 different subunits. Subunits NuoA, H, J, K, L, M, N constitute the membrane sector of the complex.

The protein resides in the cell membrane. It carries out the reaction a quinone + NADH + 5 H(+)(in) = a quinol + NAD(+) + 4 H(+)(out). Functionally, NDH-1 shuttles electrons from NADH, via FMN and iron-sulfur (Fe-S) centers, to quinones in the respiratory chain. The immediate electron acceptor for the enzyme in this species is believed to be ubiquinone. Couples the redox reaction to proton translocation (for every two electrons transferred, four hydrogen ions are translocated across the cytoplasmic membrane), and thus conserves the redox energy in a proton gradient. The polypeptide is NADH-quinone oxidoreductase subunit A (Baumannia cicadellinicola subsp. Homalodisca coagulata).